The sequence spans 178 residues: Putative adenylate kinase (178 aa).

5 residues coordinate ATP: G10, G12, K13, S14, and S15. Residues 29–50 (TVVELAEKHGCIIDEEDGEIVI) are NMP. The interval 94–104 (GRNWSEEKLLE) is LID. R95 contributes to the ATP binding site.

Belongs to the adenylate kinase family. AK6 subfamily. Interacts with uS11. Not a structural component of 40S pre-ribosomes, but transiently interacts with them by binding to uS11.

It catalyses the reaction AMP + ATP = 2 ADP. The enzyme catalyses ATP + H2O = ADP + phosphate + H(+). Its function is as follows. Broad-specificity nucleoside monophosphate (NMP) kinase that catalyzes the reversible transfer of the terminal phosphate group between nucleoside triphosphates and monophosphates. Also has ATPase activity. Involved in the late maturation steps of the 30S ribosomal particles, specifically 16S rRNA maturation. While NMP activity is not required for ribosome maturation, ATPase activity is. Associates transiently with small ribosomal subunit protein uS11. ATP hydrolysis breaks the interaction with uS11. May temporarily remove uS11 from the ribosome to enable a conformational change of the ribosomal RNA that is needed for the final maturation step of the small ribosomal subunit. This is Putative adenylate kinase from Archaeoglobus fulgidus (strain ATCC 49558 / DSM 4304 / JCM 9628 / NBRC 100126 / VC-16).